The chain runs to 369 residues: 2-aminoethylphosphonate--pyruvate transaminase (369 aa).

Lysine 193 is modified (N6-(pyridoxal phosphate)lysine).

It belongs to the class-V pyridoxal-phosphate-dependent aminotransferase family. PhnW subfamily. Homodimer. Requires pyridoxal 5'-phosphate as cofactor.

It carries out the reaction (2-aminoethyl)phosphonate + pyruvate = phosphonoacetaldehyde + L-alanine. Functionally, involved in phosphonate degradation. This chain is 2-aminoethylphosphonate--pyruvate transaminase, found in Burkholderia mallei (strain NCTC 10247).